The primary structure comprises 365 residues: Chorismate synthase (365 aa).

NADP(+) is bound by residues Arg-48 and Arg-54. FMN contacts are provided by residues 125–127 (RSS), 237–238 (NA), Gly-277, 292–296 (KPTSS), and Arg-318.

This sequence belongs to the chorismate synthase family. As to quaternary structure, homotetramer. It depends on FMNH2 as a cofactor.

It carries out the reaction 5-O-(1-carboxyvinyl)-3-phosphoshikimate = chorismate + phosphate. The protein operates within metabolic intermediate biosynthesis; chorismate biosynthesis; chorismate from D-erythrose 4-phosphate and phosphoenolpyruvate: step 7/7. Functionally, catalyzes the anti-1,4-elimination of the C-3 phosphate and the C-6 proR hydrogen from 5-enolpyruvylshikimate-3-phosphate (EPSP) to yield chorismate, which is the branch point compound that serves as the starting substrate for the three terminal pathways of aromatic amino acid biosynthesis. This reaction introduces a second double bond into the aromatic ring system. This chain is Chorismate synthase, found in Polaromonas naphthalenivorans (strain CJ2).